A 397-amino-acid polypeptide reads, in one-letter code: Acetate kinase (397 aa).

N8 is a Mg(2+) binding site. Residue K15 coordinates ATP. R89 is a binding site for substrate. D146 functions as the Proton donor/acceptor in the catalytic mechanism. ATP contacts are provided by residues 206 to 210 (HVGNG), 283 to 285 (DMR), and 331 to 335 (GIGEN). E383 is a Mg(2+) binding site.

It belongs to the acetokinase family. Homodimer. Mg(2+) is required as a cofactor. Requires Mn(2+) as cofactor.

The protein localises to the cytoplasm. It carries out the reaction acetate + ATP = acetyl phosphate + ADP. The protein operates within metabolic intermediate biosynthesis; acetyl-CoA biosynthesis; acetyl-CoA from acetate: step 1/2. In terms of biological role, catalyzes the formation of acetyl phosphate from acetate and ATP. Can also catalyze the reverse reaction. The protein is Acetate kinase of Streptococcus thermophilus (strain ATCC BAA-491 / LMD-9).